The chain runs to 186 residues: Peptide deformylase (186 aa).

Fe cation is bound by residues Cys-99 and His-141. Glu-142 is an active-site residue. Residue His-145 coordinates Fe cation.

This sequence belongs to the polypeptide deformylase family. It depends on Fe(2+) as a cofactor.

It carries out the reaction N-terminal N-formyl-L-methionyl-[peptide] + H2O = N-terminal L-methionyl-[peptide] + formate. Functionally, removes the formyl group from the N-terminal Met of newly synthesized proteins. Requires at least a dipeptide for an efficient rate of reaction. N-terminal L-methionine is a prerequisite for activity but the enzyme has broad specificity at other positions. This chain is Peptide deformylase, found in Chlamydia pneumoniae (Chlamydophila pneumoniae).